A 275-amino-acid polypeptide reads, in one-letter code: NH(3)-dependent NAD(+) synthetase (275 aa).

Gly-50 to Ser-57 lines the ATP pocket. Asp-56 is a Mg(2+) binding site. Position 147 (Arg-147) interacts with deamido-NAD(+). Thr-167 contributes to the ATP binding site. Glu-172 serves as a coordination point for Mg(2+). Deamido-NAD(+) contacts are provided by Lys-180 and Asp-187. 2 residues coordinate ATP: Lys-196 and Thr-218. His-267 to Lys-268 lines the deamido-NAD(+) pocket.

This sequence belongs to the NAD synthetase family. In terms of assembly, homodimer.

The enzyme catalyses deamido-NAD(+) + NH4(+) + ATP = AMP + diphosphate + NAD(+) + H(+). It functions in the pathway cofactor biosynthesis; NAD(+) biosynthesis; NAD(+) from deamido-NAD(+) (ammonia route): step 1/1. In terms of biological role, catalyzes the ATP-dependent amidation of deamido-NAD to form NAD. Uses ammonia as a nitrogen source. The polypeptide is NH(3)-dependent NAD(+) synthetase (Ectopseudomonas mendocina (strain ymp) (Pseudomonas mendocina)).